A 568-amino-acid polypeptide reads, in one-letter code: SLAIN motif-containing protein 1 (568 aa).

Disordered regions lie at residues 1 to 22 (MMAE…SGPV), 59 to 92 (LLLL…TAAA), 139 to 162 (GGGP…SPPP), 235 to 256 (YTSR…STSE), and 291 to 403 (STSA…LRRS). The stretch at 21–56 (PVVNAELEVKKLQELVRKLEKQNEQLRSRAASAAAA) forms a coiled coil. A compositionally biased stretch (pro residues) spans 62-74 (LPPPPPAAPPPAG). Residues 75–92 (LQPLGPRSPPAATATAAA) show a composition bias toward low complexity. Residues 139 to 149 (GGGPEPGGAGT) show a composition bias toward gly residues. Over residues 235–245 (YTSRGSPLSPQ) the composition is skewed to polar residues. Residue Ser243 is modified to Phosphoserine. Composition is skewed to low complexity over residues 246–255 (SSIDSELSTS) and 291–307 (STSA…SLSS). The segment covering 316–329 (QEYDQYSLEDEEEF) has biased composition (acidic residues). A compositionally biased stretch (low complexity) spans 366-384 (SSQYFPSNNYQQQQYYSPQ). Residues 385–395 (AQTPDQQPNRT) show a composition bias toward polar residues. Arg471 and Arg543 each carry asymmetric dimethylarginine.

The protein belongs to the SLAIN motif-containing family. In terms of assembly, interacts with MAPRE1, MAPRE2, MAPRE3 and CKAP5. Interacts with ZDHHC17 (via ANK repeats). In terms of tissue distribution, expressed in embryonic stem cells. Expressed in brain.

The protein resides in the cytoplasm. It is found in the cytoskeleton. In terms of biological role, microtubule plus-end tracking protein that might be involved in the regulation of cytoplasmic microtubule dynamics, microtubule organization and microtubule elongation. This Homo sapiens (Human) protein is SLAIN motif-containing protein 1 (SLAIN1).